A 432-amino-acid polypeptide reads, in one-letter code: Ornithine aminotransferase, mitochondrial (432 aa).

N6-(pyridoxal phosphate)lysine is present on lysine 287.

The protein belongs to the class-III pyridoxal-phosphate-dependent aminotransferase family. In terms of assembly, homotetramer. Pyridoxal 5'-phosphate serves as cofactor.

It is found in the mitochondrion matrix. It catalyses the reaction a 2-oxocarboxylate + L-ornithine = L-glutamate 5-semialdehyde + an L-alpha-amino acid. It functions in the pathway amino-acid biosynthesis; L-proline biosynthesis; L-glutamate 5-semialdehyde from L-ornithine: step 1/1. The sequence is that of Ornithine aminotransferase, mitochondrial (Oat) from Drosophila ananassae (Fruit fly).